The chain runs to 109 residues: Small ribosomal subunit protein uS17 (109 aa).

The protein belongs to the universal ribosomal protein uS17 family. As to quaternary structure, part of the 30S ribosomal subunit.

Functionally, one of the primary rRNA binding proteins, it binds specifically to the 5'-end of 16S ribosomal RNA. The sequence is that of Small ribosomal subunit protein uS17 from Thermoplasma acidophilum (strain ATCC 25905 / DSM 1728 / JCM 9062 / NBRC 15155 / AMRC-C165).